The chain runs to 192 residues: Adenylate kinase (192 aa).

ATP is bound at residue 10 to 15 (GSGKGT). The tract at residues 30-59 (STGDMLREVISRETEVGRKAKAIINAGALV) is NMP. Residues T31, R36, 57–59 (ALV), 85–88 (GYPR), and Q92 each bind AMP. Residues 126–142 (KRVQETIAVGGQVRSDD) form an LID region. R127 serves as a coordination point for ATP. AMP contacts are provided by R139 and R150. M178 contributes to the ATP binding site.

The protein belongs to the adenylate kinase family. Monomer.

It is found in the cytoplasm. It catalyses the reaction AMP + ATP = 2 ADP. The protein operates within purine metabolism; AMP biosynthesis via salvage pathway; AMP from ADP: step 1/1. In terms of biological role, catalyzes the reversible transfer of the terminal phosphate group between ATP and AMP. Plays an important role in cellular energy homeostasis and in adenine nucleotide metabolism. This chain is Adenylate kinase, found in Bartonella quintana (strain Toulouse) (Rochalimaea quintana).